Reading from the N-terminus, the 175-residue chain is Large ribosomal subunit protein bL9 (175 aa).

This sequence belongs to the bacterial ribosomal protein bL9 family.

In terms of biological role, binds to the 23S rRNA. The protein is Large ribosomal subunit protein bL9 of Orientia tsutsugamushi (strain Boryong) (Rickettsia tsutsugamushi).